Consider the following 129-residue polypeptide: NADH-quinone oxidoreductase subunit A (129 aa).

3 helical membrane-spanning segments follow: residues 9-29 (FPIG…LGLA), 68-88 (LLFI…VLLL), and 97-117 (LGWP…AGLV).

It belongs to the complex I subunit 3 family. NDH-1 is composed of 14 different subunits. Subunits NuoA, H, J, K, L, M, N constitute the membrane sector of the complex.

Its subcellular location is the cell inner membrane. The catalysed reaction is a quinone + NADH + 5 H(+)(in) = a quinol + NAD(+) + 4 H(+)(out). Functionally, NDH-1 shuttles electrons from NADH, via FMN and iron-sulfur (Fe-S) centers, to quinones in the respiratory chain. The immediate electron acceptor for the enzyme in this species is believed to be ubiquinone. Couples the redox reaction to proton translocation (for every two electrons transferred, four hydrogen ions are translocated across the cytoplasmic membrane), and thus conserves the redox energy in a proton gradient. This is NADH-quinone oxidoreductase subunit A from Anaeromyxobacter dehalogenans (strain 2CP-C).